Consider the following 334-residue polypeptide: Small ribosomal subunit protein RACK1z (334 aa).

WD repeat units lie at residues 16–47, 73–103, 115–145, 163–195, 207–237, 248–277, and 296–326; these read GHNDVVTAIATPIDNSPFIVSSSRDKSLLVWD, GHSHFVQDVVLSSDGQFALSGSWDGELRLWD, GHDKDVLSVAFSVDNRQIVSASRDRTIKLWN, GHNGWVSCVRFSPNTFQPTIVSGSWDRTVKVWN, GHGGYVNAVAVSPDGSLCASGGKDGVTLLWD, DAGSIIHSLCFSPNRYWLCAATQDSIKIWD, and NQMLYCTSLNWSADGSTLYAGYTDGTIRIYK.

The protein belongs to the WD repeat G protein beta family. Ribosomal protein RACK1 subfamily. As to quaternary structure, interacts with RAC1, RAC3, RAC6, RAR1, SGT1 and RBOHB. Homodimer and heterodimer with RACK1B. In terms of tissue distribution, widely expressed.

The protein localises to the cytoplasm. The protein resides in the cell membrane. Component of the RACK1 regulatory proteins that functions in innate immunity by interacting with multiple proteins in the RAC1 immune complex. Acts as a positive regulator of reactive oxygen species (ROS) production and is required for resistance against rice blast (M.grisea) infection. This is Small ribosomal subunit protein RACK1z (RACK1A) from Oryza sativa subsp. japonica (Rice).